A 98-amino-acid chain; its full sequence is Co-chaperonin GroES 4 (98 aa).

Belongs to the GroES chaperonin family. In terms of assembly, heptamer of 7 subunits arranged in a ring. Interacts with the chaperonin GroEL.

The protein localises to the cytoplasm. Together with the chaperonin GroEL, plays an essential role in assisting protein folding. The GroEL-GroES system forms a nano-cage that allows encapsulation of the non-native substrate proteins and provides a physical environment optimized to promote and accelerate protein folding. GroES binds to the apical surface of the GroEL ring, thereby capping the opening of the GroEL channel. The protein is Co-chaperonin GroES 4 of Mesorhizobium japonicum (strain LMG 29417 / CECT 9101 / MAFF 303099) (Mesorhizobium loti (strain MAFF 303099)).